Consider the following 291-residue polypeptide: MKRVVLFLLTNLAVMLVLSVSARILGVDRFLTSNGLDMGMLLVFAALIGFGGSFISLLMSKTMAKWSTGARVIERPANQDEAWLVDTVRQLSKKAGLQMPEVAIYDGAPNAFATGPSKSRSLVAVSTGLMQSMNKKEVGAVLAHEVAHIQNGDMVTLTLIQGVVNTFVIFLSRLAAYAVDSFLRRDDDESGSPGIGYWISSIAFEIMFGILASVVVMCFSRKREYRADAGAAALMGDRAPMIDALRALGGLEAGRLPKEMAASGIAGGGMMALFSSHPPLESRIAALESAS.

2 consecutive transmembrane segments (helical) span residues 4 to 24 (VVLF…SARI) and 38 to 58 (MGML…ISLL). A Zn(2+)-binding site is contributed by H144. E145 is an active-site residue. H148 contacts Zn(2+). A run of 2 helical transmembrane segments spans residues 152-172 (GDMV…IFLS) and 199-219 (ISSI…VMCF). E224 is a Zn(2+) binding site.

Belongs to the peptidase M48B family. It depends on Zn(2+) as a cofactor.

The protein localises to the cell inner membrane. The sequence is that of Protease HtpX homolog from Chlorobium limicola (strain DSM 245 / NBRC 103803 / 6330).